The sequence spans 273 residues: Shikimate dehydrogenase (NADP(+)) (273 aa).

Shikimate-binding positions include 15–17 (SKS) and Thr62. Catalysis depends on Lys66, which acts as the Proton acceptor. Residue Glu78 participates in NADP(+) binding. Residues Asn87 and Asp103 each coordinate shikimate. Residues 127–131 (GAGGA), 151–156 (NRTHDK), and Met214 each bind NADP(+). Shikimate is bound at residue Tyr216. Gly238 lines the NADP(+) pocket.

Belongs to the shikimate dehydrogenase family. Homodimer.

It catalyses the reaction shikimate + NADP(+) = 3-dehydroshikimate + NADPH + H(+). It functions in the pathway metabolic intermediate biosynthesis; chorismate biosynthesis; chorismate from D-erythrose 4-phosphate and phosphoenolpyruvate: step 4/7. Functionally, involved in the biosynthesis of the chorismate, which leads to the biosynthesis of aromatic amino acids. Catalyzes the reversible NADPH linked reduction of 3-dehydroshikimate (DHSA) to yield shikimate (SA). This chain is Shikimate dehydrogenase (NADP(+)), found in Shewanella denitrificans (strain OS217 / ATCC BAA-1090 / DSM 15013).